The following is a 289-amino-acid chain: LBH domain-containing protein 1 (289 aa).

2 disordered regions span residues 1 to 36 (MALVPGRSKEDGLWTRNSPGSSQHPESPRLPNPLWD) and 205 to 289 (EGAE…ASQD). An LBH domain is found at 1-128 (MALVPGRSKE…AEAFFQDQSE (128 aa)). Over residues 15-25 (TRNSPGSSQHP) the composition is skewed to polar residues.

Expressed in bladder cancer tissues (at protein level).

The sequence is that of LBH domain-containing protein 1 from Homo sapiens (Human).